Here is a 316-residue protein sequence, read N- to C-terminus: Glutamyl endopeptidase (316 aa).

An N-terminal signal peptide occupies residues 1-30; sequence MVSKKSVKRGLITGLIGISIYSLGMHPAQA. Positions 31 to 94 are excised as a propeptide; sequence APSPHTPVSS…SPAKAPYSIK (64 aa). An intrachain disulfide couples cysteine 126 to cysteine 142. Catalysis depends on charge relay system residues histidine 141 and serine 261. Cysteine 275 and cysteine 279 are disulfide-bonded.

It belongs to the peptidase S1B family.

It is found in the secreted. The catalysed reaction is Preferential cleavage: Glu-|-Xaa, Asp-|-Xaa.. Its function is as follows. Specific for hydrolysis of peptide bonds on the carboxyl side of acidic amino acid residues, with a strong preference for Glu. This chain is Glutamyl endopeptidase (blaSE), found in Bacillus licheniformis (strain ATCC 14580 / DSM 13 / JCM 2505 / CCUG 7422 / NBRC 12200 / NCIMB 9375 / NCTC 10341 / NRRL NRS-1264 / Gibson 46).